A 132-amino-acid polypeptide reads, in one-letter code: Agouti-signaling protein (132 aa).

Residues 1–22 (MDVTRLLLATLLVFLCFFTAYS) form the signal peptide. A glycan (N-linked (GlcNAc...) asparagine) is linked at N39. Residues 61 to 87 (QISRKEAEKKRSSKKEASMKKVARPRT) form a disordered region. Basic and acidic residues predominate over residues 63 to 79 (SRKEAEKKRSSKKEASM). Disulfide bonds link C93/C108, C100/C114, C107/C125, C111/C132, and C116/C123. The 40-residue stretch at 93 to 132 (CVTTRDSCKPPAPACCDPCASCQCRFFRSACSCRVLSLNC) folds into the Agouti domain.

It is found in the secreted. Functionally, involved in the regulation of melanogenesis. The binding of ASP to MC1R precludes alpha-MSH initiated signaling and thus blocks production of cAMP, leading to a down-regulation of eumelanogenesis (brown/black pigment) and thus increasing synthesis of pheomelanin (yellow/red pigment). This chain is Agouti-signaling protein (ASIP), found in Macaca silenus (Lion-tailed macaque).